Here is a 366-residue protein sequence, read N- to C-terminus: Putative [LysW]-aminoadipate semialdehyde/glutamate semialdehyde transaminase (366 aa).

Pyridoxal 5'-phosphate-binding positions include glycine 90–threonine 91 and phenylalanine 117. A substrate-binding site is contributed by arginine 120. Pyridoxal 5'-phosphate is bound at residue aspartate 202–glutamine 205. At lysine 230 the chain carries N6-(pyridoxal phosphate)lysine. A substrate-binding site is contributed by serine 254. Threonine 255 is a pyridoxal 5'-phosphate binding site.

It belongs to the class-III pyridoxal-phosphate-dependent aminotransferase family. LysJ subfamily. In terms of assembly, homodimer. It depends on pyridoxal 5'-phosphate as a cofactor.

The protein resides in the cytoplasm. It carries out the reaction [amino-group carrier protein]-C-terminal-gamma-(L-lysyl)-L-glutamate + 2-oxoglutarate = [amino-group carrier protein]-C-terminal-N-(1-carboxy-5-oxopentan-1-yl)-L-glutamine + L-glutamate. It catalyses the reaction [amino-group carrier protein]-C-terminal-gamma-(L-ornithyl)-L-glutamate + 2-oxoglutarate = [amino-group carrier protein]-C-terminal-gamma-(L-glutamyl-5-semialdehyde)-L-glutamate + L-glutamate. Its pathway is amino-acid biosynthesis; L-lysine biosynthesis via AAA pathway; L-lysine from L-alpha-aminoadipate (Thermus route): step 4/5. It functions in the pathway amino-acid biosynthesis; L-arginine biosynthesis. Involved in both the arginine and lysine biosynthetic pathways. The sequence is that of Putative [LysW]-aminoadipate semialdehyde/glutamate semialdehyde transaminase from Pyrococcus horikoshii (strain ATCC 700860 / DSM 12428 / JCM 9974 / NBRC 100139 / OT-3).